The sequence spans 104 residues: uncharacterized protein (104 aa).

Over residues 58–71 the composition is skewed to basic and acidic residues; the sequence is PERDRARRDRDHHP. The segment at 58-84 is disordered; that stretch reads PERDRARRDRDHHPWSRSRSQLSPRMA.

This is an uncharacterized protein from Mycobacterium tuberculosis (strain ATCC 25618 / H37Rv).